Reading from the N-terminus, the 348-residue chain is Phosphate acyltransferase (348 aa).

This sequence belongs to the PlsX family. Homodimer. Probably interacts with PlsY.

The protein localises to the cytoplasm. It carries out the reaction a fatty acyl-[ACP] + phosphate = an acyl phosphate + holo-[ACP]. The protein operates within lipid metabolism; phospholipid metabolism. In terms of biological role, catalyzes the reversible formation of acyl-phosphate (acyl-PO(4)) from acyl-[acyl-carrier-protein] (acyl-ACP). This enzyme utilizes acyl-ACP as fatty acyl donor, but not acyl-CoA. This is Phosphate acyltransferase from Rhizobium leguminosarum bv. trifolii (strain WSM2304).